Here is a 279-residue protein sequence, read N- to C-terminus: 3-methyl-2-oxobutanoate hydroxymethyltransferase (279 aa).

Positions 44 and 83 each coordinate Mg(2+). Residues 44–45 (DS), aspartate 83, and lysine 113 each bind 3-methyl-2-oxobutanoate. Glutamate 115 is a binding site for Mg(2+). Glutamate 182 acts as the Proton acceptor in catalysis.

This sequence belongs to the PanB family. Homodecamer; pentamer of dimers. Mg(2+) is required as a cofactor.

The protein localises to the cytoplasm. It carries out the reaction 3-methyl-2-oxobutanoate + (6R)-5,10-methylene-5,6,7,8-tetrahydrofolate + H2O = 2-dehydropantoate + (6S)-5,6,7,8-tetrahydrofolate. It functions in the pathway cofactor biosynthesis; (R)-pantothenate biosynthesis; (R)-pantoate from 3-methyl-2-oxobutanoate: step 1/2. Functionally, catalyzes the reversible reaction in which hydroxymethyl group from 5,10-methylenetetrahydrofolate is transferred onto alpha-ketoisovalerate to form ketopantoate. The sequence is that of 3-methyl-2-oxobutanoate hydroxymethyltransferase from Dehalococcoides mccartyi (strain ATCC BAA-2100 / JCM 16839 / KCTC 5957 / BAV1).